Reading from the N-terminus, the 369-residue chain is Maltose/maltodextrin import ATP-binding protein MalK (369 aa).

One can recognise an ABC transporter domain in the interval 4–234 (VQLRNVTKAW…PADRFVAGFI (231 aa)). 36–43 (GPSGCGKS) provides a ligand contact to ATP.

It belongs to the ABC transporter superfamily. Maltooligosaccharide importer (TC 3.A.1.1.1) family. The complex is composed of two ATP-binding proteins (MalK), two transmembrane proteins (MalG and MalK) and a solute-binding protein (MalE).

It is found in the cell inner membrane. It carries out the reaction D-maltose(out) + ATP + H2O = D-maltose(in) + ADP + phosphate + H(+). Its function is as follows. Part of the ABC transporter complex MalEFGK involved in maltose/maltodextrin import. Responsible for energy coupling to the transport system. In Salmonella choleraesuis (strain SC-B67), this protein is Maltose/maltodextrin import ATP-binding protein MalK.